A 103-amino-acid polypeptide reads, in one-letter code: Large ribosomal subunit protein bL36m (103 aa).

The protein belongs to the bacterial ribosomal protein bL36 family. In terms of assembly, component of the mitochondrial large ribosomal subunit (mt-LSU). Mature mammalian 55S mitochondrial ribosomes consist of a small (28S) and a large (39S) subunit. The 28S small subunit contains a 12S ribosomal RNA (12S mt-rRNA) and 30 different proteins. The 39S large subunit contains a 16S rRNA (16S mt-rRNA), a copy of mitochondrial valine transfer RNA (mt-tRNA(Val)), which plays an integral structural role, and 52 different proteins. bL36m has a zinc binding site.

It localises to the mitochondrion. This is Large ribosomal subunit protein bL36m (MRPL36) from Homo sapiens (Human).